The sequence spans 642 residues: Chaperone protein DnaK (642 aa).

Residue Thr-198 is modified to Phosphothreonine; by autocatalysis. Over residues 578 to 589 the composition is skewed to basic and acidic residues; that stretch reads DDKEAIESRMQK. Residues 578–642 are disordered; it reads DDKEAIESRM…FEEVKDGDKK (65 aa). Over residues 603 to 619 the composition is skewed to low complexity; sequence AEQAAQQGGDAGAQAED.

This sequence belongs to the heat shock protein 70 family.

Its function is as follows. Acts as a chaperone. This Hahella chejuensis (strain KCTC 2396) protein is Chaperone protein DnaK.